A 147-amino-acid chain; its full sequence is Hemoglobin subunit delta (147 aa).

The 145-residue stretch at His-3–His-147 folds into the Globin domain. Residues His-64 and His-93 each contribute to the heme b site.

Belongs to the globin family. In terms of assembly, heterotetramer of two delta chains and two alpha chains. As to expression, red blood cells.

The sequence is that of Hemoglobin subunit delta (HBD) from Carlito syrichta (Philippine tarsier).